The sequence spans 494 residues: Aspartyl/glutamyl-tRNA(Asn/Gln) amidotransferase subunit B (494 aa).

This sequence belongs to the GatB/GatE family. GatB subfamily. In terms of assembly, heterotrimer of A, B and C subunits.

The catalysed reaction is L-glutamyl-tRNA(Gln) + L-glutamine + ATP + H2O = L-glutaminyl-tRNA(Gln) + L-glutamate + ADP + phosphate + H(+). It catalyses the reaction L-aspartyl-tRNA(Asn) + L-glutamine + ATP + H2O = L-asparaginyl-tRNA(Asn) + L-glutamate + ADP + phosphate + 2 H(+). In terms of biological role, allows the formation of correctly charged Asn-tRNA(Asn) or Gln-tRNA(Gln) through the transamidation of misacylated Asp-tRNA(Asn) or Glu-tRNA(Gln) in organisms which lack either or both of asparaginyl-tRNA or glutaminyl-tRNA synthetases. The reaction takes place in the presence of glutamine and ATP through an activated phospho-Asp-tRNA(Asn) or phospho-Glu-tRNA(Gln). The polypeptide is Aspartyl/glutamyl-tRNA(Asn/Gln) amidotransferase subunit B (Trichodesmium erythraeum (strain IMS101)).